The primary structure comprises 256 residues: Imidazole glycerol phosphate synthase subunit HisF (256 aa).

Residues Asp-12 and Asp-131 contribute to the active site.

This sequence belongs to the HisA/HisF family. In terms of assembly, heterodimer of HisH and HisF.

It localises to the cytoplasm. The enzyme catalyses 5-[(5-phospho-1-deoxy-D-ribulos-1-ylimino)methylamino]-1-(5-phospho-beta-D-ribosyl)imidazole-4-carboxamide + L-glutamine = D-erythro-1-(imidazol-4-yl)glycerol 3-phosphate + 5-amino-1-(5-phospho-beta-D-ribosyl)imidazole-4-carboxamide + L-glutamate + H(+). It functions in the pathway amino-acid biosynthesis; L-histidine biosynthesis; L-histidine from 5-phospho-alpha-D-ribose 1-diphosphate: step 5/9. Functionally, IGPS catalyzes the conversion of PRFAR and glutamine to IGP, AICAR and glutamate. The HisF subunit catalyzes the cyclization activity that produces IGP and AICAR from PRFAR using the ammonia provided by the HisH subunit. The polypeptide is Imidazole glycerol phosphate synthase subunit HisF (Beutenbergia cavernae (strain ATCC BAA-8 / DSM 12333 / CCUG 43141 / JCM 11478 / NBRC 16432 / NCIMB 13614 / HKI 0122)).